The primary structure comprises 794 residues: Zinc finger protein 148 (794 aa).

A Glycyl lysine isopeptide (Lys-Gly) (interchain with G-Cter in SUMO2) cross-link involves residue Lys-6. Ser-51 carries the phosphoserine modification. Glycyl lysine isopeptide (Lys-Gly) (interchain with G-Cter in SUMO2) cross-links involve residues Lys-88, Lys-115, and Lys-132. The segment at 171–193 adopts a C2H2-type 1 zinc-finger fold; that stretch reads HVCEHCNAAFRTNYHLQRHVFIH. Residue Thr-194 is modified to Phosphothreonine. 2 consecutive C2H2-type zinc fingers follow at residues 199 to 221 and 227 to 249; these read FQCS…EKIH and FRCD…KRTH. Residue Ser-250 is modified to Phosphoserine. A C2H2-type 4 zinc finger spans residues 255–278; the sequence is YQCEYCLQYFSRTDRVLKHKRMCH. Lys-291 is covalently cross-linked (Glycyl lysine isopeptide (Lys-Gly) (interchain with G-Cter in SUMO2)). The tract at residues 298 to 336 is disordered; the sequence is EEDSGFSTSPKDNSLPKKKRQKTEKKSSGMDKESALDKS. Ser-301 and Ser-306 each carry phosphoserine. A Glycyl lysine isopeptide (Lys-Gly) (interchain with G-Cter in SUMO2) cross-link involves residue Lys-308. The span at 321-336 shows a compositional bias: basic and acidic residues; that stretch reads EKKSSGMDKESALDKS. Lys-356 is covalently cross-linked (Glycyl lysine isopeptide (Lys-Gly) (interchain with G-Cter in SUMO1); alternate). A Glycyl lysine isopeptide (Lys-Gly) (interchain with G-Cter in SUMO2); alternate cross-link involves residue Lys-356. Lys-402 participates in a covalent cross-link: Glycyl lysine isopeptide (Lys-Gly) (interchain with G-Cter in SUMO2). The residue at position 412 (Ser-412) is a Phosphoserine. Glycyl lysine isopeptide (Lys-Gly) (interchain with G-Cter in SUMO2) cross-links involve residues Lys-421 and Lys-424. Polar residues predominate over residues 574 to 588; sequence NSSEVPEVTPSENVG. A disordered region spans residues 574–599; it reads NSSEVPEVTPSENVGSSSQASSSDKA. At Lys-607 the chain carries N6-acetyllysine. Residues Ser-665 and Ser-784 each carry the phosphoserine modification.

The protein belongs to the krueppel C2H2-type zinc-finger protein family. As to quaternary structure, interacts with HNRNPDL. Interacts with the 5FMC complex; the interaction requires association with CHTOP. Interacts with CAVIN1. Post-translationally, sumoylated with SUMO2. Desumoylated by SENP3, resulting in the stimulation of transcription of its target genes.

It is found in the nucleus. Its function is as follows. Involved in transcriptional regulation. Represses the transcription of a number of genes including gastrin, stromelysin and enolase. Binds to the G-rich box in the enhancer region of these genes. The protein is Zinc finger protein 148 (ZNF148) of Pongo abelii (Sumatran orangutan).